The following is a 125-amino-acid chain: Phosphoribosyl-AMP cyclohydrolase (125 aa).

Position 74 (Asp74) interacts with Mg(2+). Zn(2+) is bound at residue Cys75. Mg(2+) contacts are provided by Asp76 and Asp78. Cys92 and Cys99 together coordinate Zn(2+).

It belongs to the PRA-CH family. In terms of assembly, homodimer. It depends on Mg(2+) as a cofactor. Zn(2+) serves as cofactor.

It localises to the cytoplasm. It catalyses the reaction 1-(5-phospho-beta-D-ribosyl)-5'-AMP + H2O = 1-(5-phospho-beta-D-ribosyl)-5-[(5-phospho-beta-D-ribosylamino)methylideneamino]imidazole-4-carboxamide. Its pathway is amino-acid biosynthesis; L-histidine biosynthesis; L-histidine from 5-phospho-alpha-D-ribose 1-diphosphate: step 3/9. In terms of biological role, catalyzes the hydrolysis of the adenine ring of phosphoribosyl-AMP. In Trichlorobacter lovleyi (strain ATCC BAA-1151 / DSM 17278 / SZ) (Geobacter lovleyi), this protein is Phosphoribosyl-AMP cyclohydrolase.